The chain runs to 153 residues: Arginine repressor (153 aa).

This sequence belongs to the ArgR family.

It localises to the cytoplasm. The protein operates within amino-acid biosynthesis; L-arginine biosynthesis [regulation]. Its function is as follows. Regulates arginine biosynthesis genes. This chain is Arginine repressor, found in Clostridium tetani (strain Massachusetts / E88).